The following is a 931-amino-acid chain: Phosphoenolpyruvate carboxylase (931 aa).

Residues H138 and K594 contribute to the active site.

This sequence belongs to the PEPCase type 1 family. Mg(2+) is required as a cofactor.

It catalyses the reaction oxaloacetate + phosphate = phosphoenolpyruvate + hydrogencarbonate. Functionally, forms oxaloacetate, a four-carbon dicarboxylic acid source for the tricarboxylic acid cycle. The protein is Phosphoenolpyruvate carboxylase of Streptococcus agalactiae serotype III (strain NEM316).